Reading from the N-terminus, the 503-residue chain is Probable cytosol aminopeptidase (503 aa).

Lys274 and Asp279 together coordinate Mn(2+). Lys286 is a catalytic residue. The Mn(2+) site is built by Asp297, Asp356, and Glu358. Arg360 is a catalytic residue.

This sequence belongs to the peptidase M17 family. Requires Mn(2+) as cofactor.

It localises to the cytoplasm. It catalyses the reaction Release of an N-terminal amino acid, Xaa-|-Yaa-, in which Xaa is preferably Leu, but may be other amino acids including Pro although not Arg or Lys, and Yaa may be Pro. Amino acid amides and methyl esters are also readily hydrolyzed, but rates on arylamides are exceedingly low.. It carries out the reaction Release of an N-terminal amino acid, preferentially leucine, but not glutamic or aspartic acids.. Presumably involved in the processing and regular turnover of intracellular proteins. Catalyzes the removal of unsubstituted N-terminal amino acids from various peptides. In Burkholderia pseudomallei (strain 1710b), this protein is Probable cytosol aminopeptidase.